We begin with the raw amino-acid sequence, 831 residues long: MDIFDSTITSFEDFPSERFKEQLESLTYESIERASQFVLENLPCIDDLFDVLLNRMRKSAYHKRLLFFNLIDCICIGCSRIENDVYKKFIINNVDEIIPLILPDDNLEVKKKNRETIERIIRSWSNNHVFNDTFISRAFSILSGVAKESRSICPNLSEKEIARLLKRMEEKRKDQNKKRLDLEDSHPLDEFLELWFNFNLDNSSSSSSSSSSSSSSSSTTTTTTTTSELSSISTSLNSIRTNSSCSNNNLQIDIEIIEKEKEKQKEHFNSFNDTSITTPSTSSSTTSSSSSSSSSSSSSSSSSSSSSSSSSSSSSSSSSSSSSSSSSSLDNSTTNDNNNNTSNNKNNNNDNYNNQSILEKERIYKLDYEVYDSFKSQFTIPEWPSYEIEDIDLFTSGNDGEYQDYIENEYNSFDQNSYLEYKKKYKNNEFENSIGNSNNYYNRNSSNNNNNNNNNNNNNNNNNNNNNNNNNNNNNNNEDSGNFMNSILNYCFYEHKNHFNFIKNNRNNHYPYNTSGYLNNRVDNYQPYSPKTTSDSHKLQEYFNKIDYMNKNGISVVDICAKSKSFEIPNICGADGGDSDRMDIDTNNSLKNENKQNDSHRGKSRKRRSSSRGESEHSRYYRDSSRDAKDRDSRDHRDNRDHRDSRDHRDRRDSRDHRDSRDYRDHRDSRDYRDSRDSRDSRDSRDRESRDSRDHRESRDSRDHRESRDSREYRESRDHRDHSRDSRDQYRDKDHRDSSDGRDHRNRDDKYQIDKRDNQHHNERNDSRNDRNDKNDKNDKNDKNDKNQEKYSERYHNERDSRDNEKDFYRSKETMVNNDNRSSSNRSSNRH.

The CID domain occupies 1–146 (MDIFDSTITS…RAFSILSGVA (146 aa)). Disordered stretches follow at residues 205 to 233 (SSSSSSSSSSSSSSTTTTTTTTSELSSIS), 265 to 354 (KEHF…NYNN), 434 to 480 (IGNS…NEDS), and 572 to 831 (CGAD…SNRH). 2 stretches are compositionally biased toward low complexity: residues 272 to 354 (NDTS…NYNN) and 434 to 477 (IGNS…NNNN). Basic and acidic residues-rich tracts occupy residues 592–601 (NENKQNDSHR) and 611–813 (SRGE…RSKE). Over residues 817–831 (NNDNRSSSNRSSNRH) the composition is skewed to low complexity.

This is an uncharacterized protein from Dictyostelium discoideum (Social amoeba).